The sequence spans 561 residues: Putative transport protein YbjL (561 aa).

5 consecutive transmembrane segments (helical) span residues 8–28 (LLNG…LCLG), 32–52 (LGSI…LLGQ), 66–86 (FMLF…SIFF), 94–114 (MLAL…GKLF), and 158–178 (NLSL…IVGA). 2 consecutive RCK C-terminal domains span residues 200-288 (RGLD…SFRN) and 292-373 (VFDR…RIGF). The next 5 helical transmembrane spans lie at 383 to 403 (LLAF…TFQF), 406 to 426 (FSFG…LGFM), 451 to 471 (VFMA…LGAI), 475 to 495 (MLIA…LFGA), and 540 to 560 (AIAN…WPGL).

The protein belongs to the AAE transporter (TC 2.A.81) family. YbjL subfamily.

Its subcellular location is the cell membrane. This is Putative transport protein YbjL from Shigella sonnei (strain Ss046).